An 816-amino-acid polypeptide reads, in one-letter code: Fibroblast growth factor receptor (816 aa).

The N-terminal stretch at 1-19 (MISDWCVVLVLLMSRLVFG) is a signal peptide. At 20 to 370 (LNFTEPVNYI…YKEESVEKTV (351 aa)) the chain is on the extracellular side. N-linked (GlcNAc...) asparagine glycans are attached at residues Asn21, Asn69, Asn119, Asn156, Asn171, Asn244, Asn274, Asn313, and Asn321. The 81-residue stretch at 25 to 105 (PVNYILKLGE…VTAMNEESVQ (81 aa)) folds into the Ig-like C2-type 1 domain. Cys43 and Cys94 are oxidised to a cystine. Positions 126-217 (LRIKNDISLL…GKIEHIMTVE (92 aa)) constitute an Ig-like C2-type 2 domain. Residues Cys147 and Cys201 are joined by a disulfide bond. Residues 371–391 (IFIVITSMLAGLIFVAFVIFF) form a helical membrane-spanning segment. Residues 392–816 (ICRVRSKDKF…DILLSHYAVS (425 aa)) are Cytoplasmic-facing. The Protein kinase domain maps to 474–747 (LETDCLLGEG…QLIEDLERML (274 aa)). Residues 480 to 488 (LGEGAFGRV) and Lys508 contribute to the ATP site. Catalysis depends on Asp612, which acts as the Proton acceptor. Tyr643 carries the post-translational modification Phosphotyrosine; by autocatalysis.

The protein belongs to the protein kinase superfamily. Tyr protein kinase family. Fibroblast growth factor receptor subfamily.

Its subcellular location is the membrane. The enzyme catalyses L-tyrosyl-[protein] + ATP = O-phospho-L-tyrosyl-[protein] + ADP + H(+). In terms of biological role, receptor for basic fibroblast growth factor. The protein is Fibroblast growth factor receptor (FGFR) of Hydra vulgaris (Hydra).